We begin with the raw amino-acid sequence, 137 residues long: Large ribosomal subunit protein uL16 (137 aa).

This sequence belongs to the universal ribosomal protein uL16 family. Part of the 50S ribosomal subunit.

Functionally, binds 23S rRNA and is also seen to make contacts with the A and possibly P site tRNAs. This is Large ribosomal subunit protein uL16 from Spiroplasma kunkelii.